Consider the following 333-residue polypeptide: MSKARVYADVNVLRPKEYWDYEALTVQWGEQDDYEVVRKVGRGKYSEVFEGINVNNNEKCIIKILKPVKKKKIKREIKILQNLCGGPNIVKLLDIVRDQHSKTPSLIFEYVNNTDFKVLYPTLTDYDIRYYIYELLKALDYCHSQGIMHRDVKPHNVMIDHELRKLRLIDWGLAEFYHPGKEYNVRVASRYFKGPELLVDLQDYDYSLDMWSLGCMFAGMIFRKEPFFYGHDNHDQLVKIAKVLGTEALNAYLNKYHIELDPQLEALVGRHSRKPWSKFINADNQHLVSPEAVDFLDKLLRYDHQDRLTAREAMAHPYFLQVRAAENSRARPQ.

Residues 34 to 319 (YEVVRKVGRG…AREAMAHPYF (286 aa)) enclose the Protein kinase domain. Residues 40-48 (VGRGKYSEV) and lysine 63 each bind ATP. Catalysis depends on aspartate 151, which acts as the Proton acceptor.

The protein belongs to the protein kinase superfamily. Ser/Thr protein kinase family. CK2 subfamily. In terms of assembly, monomer. In terms of processing, autophosphorylated.

The protein localises to the cytoplasm. The enzyme catalyses L-seryl-[protein] + ATP = O-phospho-L-seryl-[protein] + ADP + H(+). It carries out the reaction L-threonyl-[protein] + ATP = O-phospho-L-threonyl-[protein] + ADP + H(+). Its function is as follows. Casein kinases are operationally defined by their preferential utilization of acidic proteins such as caseins as substrates. It can phosphorylate a large number of proteins. Involved in photoperiod sensitivity (PS). Increases days-to-heading under natural day (ND) and long day (LD) conditions, but not under short day (SD) conditions. The polypeptide is Casein kinase II subunit alpha-2 (Oryza sativa subsp. indica (Rice)).